The chain runs to 105 residues: Nitrogenase-stabilizing/protective protein NifW (105 aa).

This sequence belongs to the NifW family. As to quaternary structure, homotrimer; associates with NifD.

In terms of biological role, may protect the nitrogenase Fe-Mo protein from oxidative damage. The chain is Nitrogenase-stabilizing/protective protein NifW from Rhodospirillum centenum (strain ATCC 51521 / SW).